The chain runs to 206 residues: Oligoribonuclease (206 aa).

Residues 20–183 (LVWLDMEMTG…ADIHESIDEL (164 aa)) form the Exonuclease domain. Tyr141 is an active-site residue.

It belongs to the oligoribonuclease family.

It localises to the cytoplasm. Functionally, 3'-to-5' exoribonuclease specific for small oligoribonucleotides. This Burkholderia ambifaria (strain ATCC BAA-244 / DSM 16087 / CCUG 44356 / LMG 19182 / AMMD) (Burkholderia cepacia (strain AMMD)) protein is Oligoribonuclease.